A 454-amino-acid polypeptide reads, in one-letter code: PC-esterase domain-containing protein 1A (454 aa).

The protein belongs to the PC-esterase family.

This chain is PC-esterase domain-containing protein 1A (PCED1A), found in Homo sapiens (Human).